Reading from the N-terminus, the 171-residue chain is Translationally-controlled tumor protein homolog (171 aa).

The TCTP domain occupies 1–171 (MKIWKDVFTG…FKHGLEEEKF (171 aa)).

It belongs to the TCTP family.

It localises to the cytoplasm. Functionally, involved in calcium binding and microtubule stabilization. In Anopheles gambiae (African malaria mosquito), this protein is Translationally-controlled tumor protein homolog.